The following is a 253-amino-acid chain: Glucosamine-6-phosphate deaminase (253 aa).

Asp-65 acts as the Proton acceptor; for enolization step in catalysis. Asn-133 functions as the For ring-opening step in the catalytic mechanism. The active-site Proton acceptor; for ring-opening step is the His-135. Catalysis depends on Glu-140, which acts as the For ring-opening step.

It belongs to the glucosamine/galactosamine-6-phosphate isomerase family. NagB subfamily.

It carries out the reaction alpha-D-glucosamine 6-phosphate + H2O = beta-D-fructose 6-phosphate + NH4(+). It participates in amino-sugar metabolism; N-acetylneuraminate degradation; D-fructose 6-phosphate from N-acetylneuraminate: step 5/5. Its function is as follows. Catalyzes the reversible isomerization-deamination of glucosamine 6-phosphate (GlcN6P) to form fructose 6-phosphate (Fru6P) and ammonium ion. The sequence is that of Glucosamine-6-phosphate deaminase from Corynebacterium glutamicum (strain ATCC 13032 / DSM 20300 / JCM 1318 / BCRC 11384 / CCUG 27702 / LMG 3730 / NBRC 12168 / NCIMB 10025 / NRRL B-2784 / 534).